The chain runs to 314 residues: Homoserine O-succinyltransferase (314 aa).

C142 functions as the Acyl-thioester intermediate in the catalytic mechanism. Substrate is bound by residues K163 and S192. H235 serves as the catalytic Proton acceptor. The active site involves E237. R249 is a binding site for substrate.

Belongs to the MetA family.

It is found in the cytoplasm. It catalyses the reaction L-homoserine + succinyl-CoA = O-succinyl-L-homoserine + CoA. It functions in the pathway amino-acid biosynthesis; L-methionine biosynthesis via de novo pathway; O-succinyl-L-homoserine from L-homoserine: step 1/1. Its function is as follows. Transfers a succinyl group from succinyl-CoA to L-homoserine, forming succinyl-L-homoserine. This Photobacterium profundum (strain SS9) protein is Homoserine O-succinyltransferase.